Consider the following 62-residue polypeptide: uncharacterized protein (62 aa).

The chain crosses the membrane as a helical span at residues 15–37 (FSSGVLISNFLLFNFIIISHSSL). Low complexity predominate over residues 41–56 (TTTTTTTTTTTTNTKS). The disordered stretch occupies residues 41 to 62 (TTTTTTTTTTTTNTKSTLHRSG).

The protein resides in the membrane. This is an uncharacterized protein from Dictyostelium discoideum (Social amoeba).